Consider the following 297-residue polypeptide: uncharacterized protein (297 aa).

2 consecutive transmembrane segments (helical) span residues 17–37 (LALS…KEIF) and 48–68 (TISG…GYSI). The PNPLA domain occupies 17-196 (LALSGGGFYG…TLNYPITLFD (180 aa)). The GXGXXG signature appears at 21-26 (GGGFYG). Residues 51–55 (GVSVG) carry the GXSXG motif. Ser53 functions as the Nucleophile in the catalytic mechanism. Asn122 carries an N-linked (GlcNAc...) asparagine; by host glycan. The active-site Proton acceptor is the Asp183. The short motif at 183-185 (DGG) is the DGA/G element. Asn239 is a glycosylation site (N-linked (GlcNAc...) asparagine; by host).

The protein resides in the membrane. In terms of biological role, probable lipid hydrolase. This is an uncharacterized protein from Acanthamoeba polyphaga mimivirus (APMV).